The sequence spans 659 residues: UvrABC system protein B (659 aa).

In terms of domain architecture, Helicase ATP-binding spans 25–182 (QSIENGNRGQ…KKLIEIQYER (158 aa)). Residue 38 to 45 (GVTGSGKT) participates in ATP binding. Residues 91–114 (YYDYYQPEAYVPQTDTFIEKDASI) carry the Beta-hairpin motif. Residues 429-582 (QIDDLYGEIQ…QMEYNEEHNI (154 aa)) enclose the Helicase C-terminal domain. One can recognise a UVR domain in the interval 622–657 (EKLIEQYEEEMKEAAKNLQFERAAELRDIIKDLKEN).

The protein belongs to the UvrB family. As to quaternary structure, forms a heterotetramer with UvrA during the search for lesions. Interacts with UvrC in an incision complex.

Its subcellular location is the cytoplasm. The UvrABC repair system catalyzes the recognition and processing of DNA lesions. A damage recognition complex composed of 2 UvrA and 2 UvrB subunits scans DNA for abnormalities. Upon binding of the UvrA(2)B(2) complex to a putative damaged site, the DNA wraps around one UvrB monomer. DNA wrap is dependent on ATP binding by UvrB and probably causes local melting of the DNA helix, facilitating insertion of UvrB beta-hairpin between the DNA strands. Then UvrB probes one DNA strand for the presence of a lesion. If a lesion is found the UvrA subunits dissociate and the UvrB-DNA preincision complex is formed. This complex is subsequently bound by UvrC and the second UvrB is released. If no lesion is found, the DNA wraps around the other UvrB subunit that will check the other stand for damage. This chain is UvrABC system protein B, found in Clostridium perfringens (strain SM101 / Type A).